The primary structure comprises 96 residues: Prokineticin Bv8-like peptide 2 (96 aa).

Residues 1–19 form the signal peptide; it reads MKCFAQIVVLLLVIAFSHG. 5 cysteine pairs are disulfide-bonded: cysteine 26–cysteine 38, cysteine 32–cysteine 50, cysteine 37–cysteine 78, cysteine 60–cysteine 86, and cysteine 80–cysteine 95.

Belongs to the AVIT (prokineticin) family. Expressed by the skin glands.

The protein localises to the secreted. Functionally, potent agonist for both PKR1/PROKR1 and PKR2/PROKR2, and inducer of a potent and long-lasting hyperalgesia. Also potentiates capsaicin-induced TRPV1 current when tested on DRG neurons. At subnanomolar concentrations, this protein both induces potent chemotaxis of macrophages and stimulates LPS-induced production of the pro-inflammatory cytokines IL-1 and IL-12. In vivo, potently stimulates the contraction of the guinea-pig gastrointestinal (GI) smooth muscle (nanomolar concentration) and rabbit aortic rings. In Bombina maxima (Giant fire-bellied toad), this protein is Prokineticin Bv8-like peptide 2.